We begin with the raw amino-acid sequence, 161 residues long: Nucleotide-binding protein Sden_0770 (161 aa).

It belongs to the YajQ family.

Nucleotide-binding protein. This chain is Nucleotide-binding protein Sden_0770, found in Shewanella denitrificans (strain OS217 / ATCC BAA-1090 / DSM 15013).